A 438-amino-acid chain; its full sequence is tRNA modification GTPase MnmE (438 aa).

Positions 20, 79, and 119 each coordinate (6S)-5-formyl-5,6,7,8-tetrahydrofolate. Residues 215 to 360 (GVEVAIVGPP…LEAALAARVG (146 aa)) enclose the TrmE-type G domain. Residues 225–230 (NAGKSS), 244–250 (SDEAGTT), and 269–272 (DTAG) each bind GTP. Mg(2+) is bound by residues serine 229 and threonine 250. Lysine 438 serves as a coordination point for (6S)-5-formyl-5,6,7,8-tetrahydrofolate.

The protein belongs to the TRAFAC class TrmE-Era-EngA-EngB-Septin-like GTPase superfamily. TrmE GTPase family. As to quaternary structure, homodimer. Heterotetramer of two MnmE and two MnmG subunits. K(+) serves as cofactor.

It is found in the cytoplasm. Functionally, exhibits a very high intrinsic GTPase hydrolysis rate. Involved in the addition of a carboxymethylaminomethyl (cmnm) group at the wobble position (U34) of certain tRNAs, forming tRNA-cmnm(5)s(2)U34. In Parvibaculum lavamentivorans (strain DS-1 / DSM 13023 / NCIMB 13966), this protein is tRNA modification GTPase MnmE.